A 131-amino-acid polypeptide reads, in one-letter code: Protein ApaG (131 aa).

An ApaG domain is found at 7–131; the sequence is PVKPYDLTVS…FLLAMPRTLH (125 aa).

This Bordetella bronchiseptica (strain ATCC BAA-588 / NCTC 13252 / RB50) (Alcaligenes bronchisepticus) protein is Protein ApaG.